Reading from the N-terminus, the 292-residue chain is MTDMPSVTTPALDRYAVFGNPIGHSKSPIIHGQFASLTLQPLSYEAILAPIDGFEASLRAFFQAGGKGANVTVPFKEQAFALCDSLSAEATLAGAVNTLSLLADGTLYGDNTDGLGLVADLLRHLGSLQHKRVLLVGAGGAARGCILPLLKAEVGQLVITNRTQSKAQALVEIFSQVQQGRYSDKLQAMSMPELSGEFDLVINSTSASLAGELPPLPQSIIGNKTACYDMMYGAKPTAFNQWAVQQGAAQVIDGLGMLVGQAAKSFALWRGVEPDTSGVLKLLRDKLQADAQ.

Residues 25-27 (SKS) and threonine 72 each bind shikimate. The active-site Proton acceptor is the lysine 76. Positions 97 and 113 each coordinate shikimate. Residues 137-141 (GAGGA), 161-166 (NRTQSK), and methionine 230 contribute to the NADP(+) site. Tyrosine 232 contributes to the shikimate binding site. NADP(+) is bound at residue glycine 254.

The protein belongs to the shikimate dehydrogenase family. Homodimer.

It carries out the reaction shikimate + NADP(+) = 3-dehydroshikimate + NADPH + H(+). Its pathway is metabolic intermediate biosynthesis; chorismate biosynthesis; chorismate from D-erythrose 4-phosphate and phosphoenolpyruvate: step 4/7. Functionally, involved in the biosynthesis of the chorismate, which leads to the biosynthesis of aromatic amino acids. Catalyzes the reversible NADPH linked reduction of 3-dehydroshikimate (DHSA) to yield shikimate (SA). In Shewanella sp. (strain MR-4), this protein is Shikimate dehydrogenase (NADP(+)).